A 258-amino-acid polypeptide reads, in one-letter code: Methylthioribulose-1-phosphate dehydratase (258 aa).

The disordered stretch occupies residues 1–21 (MCSPTTENNNNNNDHLVQSSD). Cysteine 105 provides a ligand contact to substrate. Zn(2+) contacts are provided by histidine 123 and histidine 125. Catalysis depends on glutamate 153, which acts as the Proton donor/acceptor. Histidine 210 provides a ligand contact to Zn(2+).

This sequence belongs to the aldolase class II family. MtnB subfamily. It depends on Zn(2+) as a cofactor.

It is found in the cytoplasm. It carries out the reaction 5-(methylsulfanyl)-D-ribulose 1-phosphate = 5-methylsulfanyl-2,3-dioxopentyl phosphate + H2O. The protein operates within amino-acid biosynthesis; L-methionine biosynthesis via salvage pathway; L-methionine from S-methyl-5-thio-alpha-D-ribose 1-phosphate: step 2/6. In terms of biological role, catalyzes the dehydration of methylthioribulose-1-phosphate (MTRu-1-P) into 2,3-diketo-5-methylthiopentyl-1-phosphate (DK-MTP-1-P). In Neurospora crassa (strain ATCC 24698 / 74-OR23-1A / CBS 708.71 / DSM 1257 / FGSC 987), this protein is Methylthioribulose-1-phosphate dehydratase.